The sequence spans 380 residues: MKNEMLGVILAGGKGTRLGKLTHNQAKPAVPFGGRYRIIDFTLSNCVNSGVKNIGVITQYQPLNLNAHIGNGASWGLDDLNAGVTILQPYSNNEGSKWFEGTAHAIYQNIGYIDQMDPEYILILSGDHIYKMDYEAMLDQHKETGASLTVAVIDVPWDEASRFGIMNTDDNNRIIDFEEKPAEPKSNHASMGIYIFNWKRLREVLVNSFTRNQDMVDFGKNVIPYYLKSGESVFAYNFKGYWKDVGTIDSLWHANMEFLDENNELNLQDRTWRIYSRNPIAPPQIIAETAEIKDAMIVDGSYIAGKVDHSILSANVRIQTGSVVTDSVIMPGAKIGKNVTIHRAIIGEGAVIGDDVVIDGTDEIAVIGNKEVVGVTSHEE.

Alpha-D-glucose 1-phosphate contacts are provided by residues glycine 164, 179 to 180 (EK), and serine 190.

It belongs to the bacterial/plant glucose-1-phosphate adenylyltransferase family. Homotetramer.

The enzyme catalyses alpha-D-glucose 1-phosphate + ATP + H(+) = ADP-alpha-D-glucose + diphosphate. It participates in glycan biosynthesis; glycogen biosynthesis. In terms of biological role, involved in the biosynthesis of ADP-glucose, a building block required for the elongation reactions to produce glycogen. Catalyzes the reaction between ATP and alpha-D-glucose 1-phosphate (G1P) to produce pyrophosphate and ADP-Glc. The protein is Glucose-1-phosphate adenylyltransferase of Ligilactobacillus salivarius (strain UCC118) (Lactobacillus salivarius).